The primary structure comprises 129 residues: Large ribosomal subunit protein bL17 (129 aa).

Belongs to the bacterial ribosomal protein bL17 family. As to quaternary structure, part of the 50S ribosomal subunit. Contacts protein L32.

The sequence is that of Large ribosomal subunit protein bL17 from Pseudomonas aeruginosa (strain UCBPP-PA14).